A 2210-amino-acid polypeptide reads, in one-letter code: RNA-directed RNA polymerase L (2210 aa).

The endonuclease stretch occupies residues 26–287 (KLNFLGQREP…ADSDDILTLS (262 aa)). Positions 51, 89, and 102 each coordinate Mn(2+). Lysine 115 is an active-site residue. In terms of domain architecture, RdRp catalytic spans 1166–1360 (LSMTINVREG…HLSGLLNKFI (195 aa)). Residue aspartate 1322 participates in Mg(2+) binding.

Belongs to the Bunyavirales RNA polymerase family. As to quaternary structure, homomultimer; the oligomeric structure is essential for the polymerase activity. Interacts with nucleoprotein N. Interacts with protein Z; this interaction inhibits viral transcription and replication, Z partially blocks the product exit tunnel for the releasing nascent RNA product. Requires Mn(2+) as cofactor. It depends on Mg(2+) as a cofactor.

It is found in the virion. It localises to the host cytoplasm. The enzyme catalyses RNA(n) + a ribonucleoside 5'-triphosphate = RNA(n+1) + diphosphate. In terms of biological role, RNA-dependent RNA polymerase, which is responsible for the replication and transcription of the viral RNA genome using antigenomic RNA as an intermediate. During transcription, synthesizes subgenomic RNAs and assures their capping by a cap-snatching mechanism, which involves the endonuclease activity cleaving the host capped pre-mRNAs. These short capped RNAs are then used as primers for viral transcription. The 3'-end of subgenomic mRNAs molecules are heterogeneous and not polyadenylated. The replicase function is to direct synthesis of antigenomic and genomic RNA which are encapsidated and non capped. As a consequence of the use of the same enzyme for both transcription and replication, these mechanisms need to be well coordinated. These processes may be regulated by proteins N and Z in a dose-dependent manner. Z protein inhibits the viral polymerase L und thus the viral transcription and RNA synthesis. This is RNA-directed RNA polymerase L from Homo sapiens (Human).